The primary structure comprises 755 residues: Xaa-Pro dipeptidyl-peptidase (755 aa).

Residues Ser-348, Asp-468, and His-498 each act as charge relay system in the active site.

The protein belongs to the peptidase S15 family. In terms of assembly, homodimer.

Its subcellular location is the cytoplasm. It catalyses the reaction Hydrolyzes Xaa-Pro-|- bonds to release unblocked, N-terminal dipeptides from substrates including Ala-Pro-|-p-nitroanilide and (sequentially) Tyr-Pro-|-Phe-Pro-|-Gly-Pro-|-Ile.. Removes N-terminal dipeptides sequentially from polypeptides having unsubstituted N-termini provided that the penultimate residue is proline. This chain is Xaa-Pro dipeptidyl-peptidase, found in Streptococcus thermophilus (strain CNRZ 1066).